Reading from the N-terminus, the 266-residue chain is 5'-nucleotidase SurE (266 aa).

Residues Asp-8, Asp-9, Ser-42, and Asn-98 each coordinate a divalent metal cation.

Belongs to the SurE nucleotidase family. A divalent metal cation serves as cofactor.

It is found in the cytoplasm. It carries out the reaction a ribonucleoside 5'-phosphate + H2O = a ribonucleoside + phosphate. Its function is as follows. Nucleotidase that shows phosphatase activity on nucleoside 5'-monophosphates. This Methanocaldococcus jannaschii (strain ATCC 43067 / DSM 2661 / JAL-1 / JCM 10045 / NBRC 100440) (Methanococcus jannaschii) protein is 5'-nucleotidase SurE.